A 217-amino-acid polypeptide reads, in one-letter code: U exon protein (217 aa).

2 disordered regions span residues 79 to 113 (ISGE…GGRV) and 171 to 217 (KEAP…WQRR). Residues 188–197 (RGQRGRKRRC) show a composition bias toward basic residues. The span at 202 to 217 (GGFQQPTGANQAWQRR) shows a compositional bias: polar residues.

It belongs to the adenoviridae U exon protein family.

The protein resides in the host nucleus. It localises to the host nucleoplasm. The protein localises to the host nucleolus. Functionally, might play a role in viral replication since it is associated with viral replication centers. Seems to have an effect on DBP localization. The polypeptide is U exon protein (Human adenovirus C serotype 5 (HAdV-5)).